The chain runs to 165 residues: Crossover junction endodeoxyribonuclease RuvC (165 aa).

Catalysis depends on residues aspartate 7, glutamate 68, and histidine 142. Positions 7, 68, and 142 each coordinate Mg(2+).

Belongs to the RuvC family. In terms of assembly, homodimer which binds Holliday junction (HJ) DNA. The HJ becomes 2-fold symmetrical on binding to RuvC with unstacked arms; it has a different conformation from HJ DNA in complex with RuvA. In the full resolvosome a probable DNA-RuvA(4)-RuvB(12)-RuvC(2) complex forms which resolves the HJ. Mg(2+) serves as cofactor.

It is found in the cytoplasm. It catalyses the reaction Endonucleolytic cleavage at a junction such as a reciprocal single-stranded crossover between two homologous DNA duplexes (Holliday junction).. Its function is as follows. The RuvA-RuvB-RuvC complex processes Holliday junction (HJ) DNA during genetic recombination and DNA repair. Endonuclease that resolves HJ intermediates. Cleaves cruciform DNA by making single-stranded nicks across the HJ at symmetrical positions within the homologous arms, yielding a 5'-phosphate and a 3'-hydroxyl group; requires a central core of homology in the junction. The consensus cleavage sequence is 5'-(A/T)TT(C/G)-3'. Cleavage occurs on the 3'-side of the TT dinucleotide at the point of strand exchange. HJ branch migration catalyzed by RuvA-RuvB allows RuvC to scan DNA until it finds its consensus sequence, where it cleaves and resolves the cruciform DNA. The sequence is that of Crossover junction endodeoxyribonuclease RuvC from Anaplasma marginale (strain Florida).